The sequence spans 268 residues: NADH-quinone oxidoreductase subunit B 1 (268 aa).

The [4Fe-4S] cluster site is built by C42, C43, C108, and C138.

This sequence belongs to the complex I 20 kDa subunit family. In terms of assembly, NDH-1 is composed of 14 different subunits. Subunits NuoB, C, D, E, F, and G constitute the peripheral sector of the complex. It depends on [4Fe-4S] cluster as a cofactor.

Its subcellular location is the cell membrane. The catalysed reaction is a quinone + NADH + 5 H(+)(in) = a quinol + NAD(+) + 4 H(+)(out). Its function is as follows. NDH-1 shuttles electrons from NADH, via FMN and iron-sulfur (Fe-S) centers, to quinones in the respiratory chain. The immediate electron acceptor for the enzyme in this species is believed to be ubiquinone. Couples the redox reaction to proton translocation (for every two electrons transferred, four hydrogen ions are translocated across the cytoplasmic membrane), and thus conserves the redox energy in a proton gradient. This Roseiflexus sp. (strain RS-1) protein is NADH-quinone oxidoreductase subunit B 1.